Reading from the N-terminus, the 729-residue chain is Fatty acid oxidation complex subunit alpha (729 aa).

The segment at 1-189 is enoyl-CoA hydratase/isomerase; the sequence is MLYKGDTLYL…KIGLVDGVVK (189 aa). Aspartate 296 contacts substrate. Positions 311–729 are 3-hydroxyacyl-CoA dehydrogenase; the sequence is ETPKQAAVLG…ARPVGDLKTA (419 aa). Residues methionine 324, aspartate 343, 400 to 402, lysine 407, and serine 429 each bind NAD(+); that span reads VVE. The active-site For 3-hydroxyacyl-CoA dehydrogenase activity is histidine 450. Residue asparagine 453 coordinates NAD(+). Substrate contacts are provided by asparagine 500 and tyrosine 660. Positions 708-729 are disordered; the sequence is RHNEPYYPPVEPARPVGDLKTA.

The protein in the N-terminal section; belongs to the enoyl-CoA hydratase/isomerase family. It in the C-terminal section; belongs to the 3-hydroxyacyl-CoA dehydrogenase family. As to quaternary structure, heterotetramer of two alpha chains (FadB) and two beta chains (FadA).

The enzyme catalyses a (3S)-3-hydroxyacyl-CoA + NAD(+) = a 3-oxoacyl-CoA + NADH + H(+). The catalysed reaction is a (3S)-3-hydroxyacyl-CoA = a (2E)-enoyl-CoA + H2O. It carries out the reaction a 4-saturated-(3S)-3-hydroxyacyl-CoA = a (3E)-enoyl-CoA + H2O. It catalyses the reaction (3S)-3-hydroxybutanoyl-CoA = (3R)-3-hydroxybutanoyl-CoA. The enzyme catalyses a (3Z)-enoyl-CoA = a 4-saturated (2E)-enoyl-CoA. The catalysed reaction is a (3E)-enoyl-CoA = a 4-saturated (2E)-enoyl-CoA. It functions in the pathway lipid metabolism; fatty acid beta-oxidation. In terms of biological role, involved in the aerobic and anaerobic degradation of long-chain fatty acids via beta-oxidation cycle. Catalyzes the formation of 3-oxoacyl-CoA from enoyl-CoA via L-3-hydroxyacyl-CoA. It can also use D-3-hydroxyacyl-CoA and cis-3-enoyl-CoA as substrate. This Escherichia coli (strain K12 / MC4100 / BW2952) protein is Fatty acid oxidation complex subunit alpha.